Here is a 393-residue protein sequence, read N- to C-terminus: Formate-dependent phosphoribosylglycinamide formyltransferase (393 aa).

N(1)-(5-phospho-beta-D-ribosyl)glycinamide contacts are provided by residues 22–23 and E82; that span reads EL. Residues R114, K155, 160 to 165, 195 to 198, and E203 each bind ATP; these read SSGKGQ and ESFV. One can recognise an ATP-grasp domain in the interval 119–308; that stretch reads RLAAEEVGLK…EFALHVRAIL (190 aa). 2 residues coordinate Mg(2+): E267 and E279. N(1)-(5-phospho-beta-D-ribosyl)glycinamide contacts are provided by residues D286, K356, and 363-364; that span reads RR.

It belongs to the PurK/PurT family. As to quaternary structure, homodimer.

It catalyses the reaction N(1)-(5-phospho-beta-D-ribosyl)glycinamide + formate + ATP = N(2)-formyl-N(1)-(5-phospho-beta-D-ribosyl)glycinamide + ADP + phosphate + H(+). It participates in purine metabolism; IMP biosynthesis via de novo pathway; N(2)-formyl-N(1)-(5-phospho-D-ribosyl)glycinamide from N(1)-(5-phospho-D-ribosyl)glycinamide (formate route): step 1/1. In terms of biological role, involved in the de novo purine biosynthesis. Catalyzes the transfer of formate to 5-phospho-ribosyl-glycinamide (GAR), producing 5-phospho-ribosyl-N-formylglycinamide (FGAR). Formate is provided by PurU via hydrolysis of 10-formyl-tetrahydrofolate. The sequence is that of Formate-dependent phosphoribosylglycinamide formyltransferase from Maridesulfovibrio salexigens (strain ATCC 14822 / DSM 2638 / NCIMB 8403 / VKM B-1763) (Desulfovibrio salexigens).